The chain runs to 147 residues: Transcriptional regulator MraZ (147 aa).

SpoVT-AbrB domains are found at residues 6–48 (NFER…NSEE) and 77–120 (TVEV…SKAK).

It belongs to the MraZ family. As to quaternary structure, forms oligomers.

Its subcellular location is the cytoplasm. It is found in the nucleoid. This is Transcriptional regulator MraZ from Mycoplasmopsis pulmonis (strain UAB CTIP) (Mycoplasma pulmonis).